The following is a 115-amino-acid chain: MKTMRKITAIIRREKLEDVKDALELMGIHGMTVSDVKGRGQQMGIRESYRGMDYCVDLLPKVQLEIVVDSEDLERTVEAISENARTGDVGDGKIFVTDVIDVVRIRTGEHGRDAI.

An O-UMP-tyrosine modification is found at tyrosine 54.

This sequence belongs to the P(II) protein family.

In terms of biological role, could be involved in the regulation of nitrogen fixation. This Methanothermobacter thermautotrophicus (strain ATCC 29096 / DSM 1053 / JCM 10044 / NBRC 100330 / Delta H) (Methanobacterium thermoautotrophicum) protein is Nitrogen regulatory protein P-II 1.